Consider the following 1181-residue polypeptide: Cellulose synthase-like protein D5 (1181 aa).

Positions 1–17 (MVKSAASQSPSPVTITV) are enriched in polar residues. Disordered stretches follow at residues 1–70 (MVKS…DEGR) and 202–229 (KEPY…LPQM). The span at 48–59 (SSRATRRTSISS) shows a compositional bias: low complexity. A compositionally biased stretch (acidic residues) spans 210–222 (DDPETEEEDEEDE). A run of 2 helical transmembrane segments spans residues 312-332 (AIIS…GLFL) and 343-363 (AMWL…SWLL). The active site involves Asp443. Positions 497–542 (VRERRRVKREYDEFKVRINSLPEAIRRRSDAYNVHEELRAKKKQME) form a coiled coil. Asp884 is a catalytic residue. A run of 6 helical transmembrane segments spans residues 966 to 986 (LFLI…QFIV), 991 to 1011 (ITFL…SLLE), 1038 to 1058 (PAAV…SFTL), 1082 to 1102 (FLMV…AVGL), 1116 to 1136 (LVGG…FAKG), and 1146 to 1166 (TIVF…WVYI).

Belongs to the glycosyltransferase 2 family. Plant cellulose synthase-like D subfamily. In terms of tissue distribution, expressed in vascular tissues.

It is found in the golgi apparatus membrane. Functionally, involved in stem and root growth. Possesses xylan and homogalacturonan synthase activity. The chain is Cellulose synthase-like protein D5 (CSLD5) from Arabidopsis thaliana (Mouse-ear cress).